Reading from the N-terminus, the 266-residue chain is Mitochondrial genome maintenance protein MGM101 (266 aa).

A mitochondrion-targeting transit peptide spans Met1–Tyr23. 2 stretches are compositionally biased toward polar residues: residues Lys37–Thr47 and Pro57–Thr68. Residues Lys37–Thr68 form a disordered region.

The protein belongs to the MGM101 family. As to quaternary structure, forms homooligomers in vitro.

It localises to the mitochondrion matrix. The protein localises to the mitochondrion nucleoid. Plays a role in the replication of the mitochondrial genome and the maintenance of its telomeres. Able to catalyze strand annealing and D-loop formation. Binds a wide variety of DNA substrates. Exhibited the highest affinity for DNA molecules carrying 3' ssDNA overhangs (Y-form, 3' FLAP, 3' overhang) and for substrates with complex structures (X-O and Fork). Forms homogeneous ring-shaped structures at the ssDNA native telomeres ends. Oligomers seem to bind to the ssDNA as a filament until they reach the double-stranded region and induce the formation of bends and loops within the double-stranded part of the molecules. In Candida parapsilosis (strain CDC 317 / ATCC MYA-4646) (Yeast), this protein is Mitochondrial genome maintenance protein MGM101.